The primary structure comprises 490 residues: Vacuolar amino acid transporter 7 (490 aa).

Topologically, residues 1 to 6 are cytoplasmic; the sequence is MEATSS. Residues 7-27 form a helical membrane-spanning segment; the sequence is ALSSTANLVKTIVGAGTLAIP. Residues 28-34 lie on the Vacuolar side of the membrane; that stretch reads YSFKSDG. A helical membrane pass occupies residues 35-55; sequence VLVGVILTLLAAVTSGLGLFV. The Cytoplasmic portion of the chain corresponds to 56–84; sequence LSKCSKTLINPRNSSFFTLCMLTYPTLAP. A helical transmembrane segment spans residues 85-105; the sequence is IFDLAMIVQCFGVGLSYLVLI. At 106–108 the chain is on the vacuolar side; that stretch reads GDL. A helical membrane pass occupies residues 109 to 129; that stretch reads FPGLFGGERNYWIIASAVIII. The Cytoplasmic portion of the chain corresponds to 130–143; sequence PLCLVKKLDQLKYS. Residues 144 to 164 form a helical membrane-spanning segment; that stretch reads SILGLFALAYISILVFSHFVF. Residues 165–190 lie on the Vacuolar side of the membrane; sequence ELGKGELTNILRNDICWWKIHDFKGL. A helical membrane pass occupies residues 191 to 211; that stretch reads LSTFSIIIFAFTGSMNLFPMI. The Cytoplasmic portion of the chain corresponds to 212-221; sequence NELKDNSMEN. Residues 222 to 242 traverse the membrane as a helical segment; the sequence is ITFVINNSISLSTALFLIVGL. The Vacuolar portion of the chain corresponds to 243–264; sequence SGYLTFGNETLGNLMLNYDPNS. Residues 265–285 form a helical membrane-spanning segment; that stretch reads IWIVIGKFCLGSMLILSFPLL. At 286 to 397 the chain is on the cytoplasmic side; it reads FHPLRIAVNN…FVKSRFYWIT (112 aa). The tract at residues 355–374 is disordered; sequence NGNFDNGSIESQENNNDERG. The span at 357–368 shows a compositional bias: polar residues; that stretch reads NFDNGSIESQEN. The chain crosses the membrane as a helical span at residues 398-418; sequence ALLLISMYTLALSVQSFALVL. The Vacuolar portion of the chain corresponds to 419–428; that stretch reads SFVGATGSTS. The chain crosses the membrane as a helical span at residues 429 to 449; sequence ISFTLPGLLGYKLIGLDSLAI. The Cytoplasmic segment spans residues 450–463; sequence GKMIPPKDRFYKRC. A helical transmembrane segment spans residues 464–484; sequence SLLLVFYGLSVMFLSLYVTVF. Residues 485–490 lie on the Vacuolar side of the membrane; it reads NRSDEA.

This sequence belongs to the amino acid/polyamine transporter 2 family.

It localises to the vacuole membrane. Its function is as follows. Probable amino acid transporter of unknown specificity. The sequence is that of Vacuolar amino acid transporter 7 (AVT7) from Saccharomyces cerevisiae (strain ATCC 204508 / S288c) (Baker's yeast).